The following is a 249-amino-acid chain: Triosephosphate isomerase (249 aa).

Asn9–Lys11 provides a ligand contact to substrate. Catalysis depends on His95, which acts as the Electrophile. Residue Glu165 is the Proton acceptor of the active site. Substrate-binding positions include Gly171, Ser211, and Gly232–Gly233.

It belongs to the triosephosphate isomerase family. Homodimer.

The protein localises to the cytoplasm. The enzyme catalyses D-glyceraldehyde 3-phosphate = dihydroxyacetone phosphate. Its pathway is carbohydrate biosynthesis; gluconeogenesis. It functions in the pathway carbohydrate degradation; glycolysis; D-glyceraldehyde 3-phosphate from glycerone phosphate: step 1/1. In terms of biological role, involved in the gluconeogenesis. Catalyzes stereospecifically the conversion of dihydroxyacetone phosphate (DHAP) to D-glyceraldehyde-3-phosphate (G3P). This Chlorobium phaeobacteroides (strain DSM 266 / SMG 266 / 2430) protein is Triosephosphate isomerase.